A 217-amino-acid polypeptide reads, in one-letter code: GTP cyclohydrolase 1 (217 aa).

Residues Cys-109, His-112, and Cys-180 each contribute to the Zn(2+) site.

This sequence belongs to the GTP cyclohydrolase I family. Toroid-shaped homodecamer, composed of two pentamers of five dimers.

The catalysed reaction is GTP + H2O = 7,8-dihydroneopterin 3'-triphosphate + formate + H(+). Its pathway is cofactor biosynthesis; 7,8-dihydroneopterin triphosphate biosynthesis; 7,8-dihydroneopterin triphosphate from GTP: step 1/1. In Photobacterium profundum (strain SS9), this protein is GTP cyclohydrolase 1.